The sequence spans 790 residues: Accumulates dyads protein 3 (790 aa).

Positions 8–122 (LNKPESLKEQ…NTLKSPNKFL (115 aa)) are disordered. Residues 39 to 49 (PESKPFRERRS) are compositionally biased toward basic and acidic residues. 2 stretches are compositionally biased toward polar residues: residues 50–78 (QTWI…ISKL) and 89–108 (ESWA…TLEN). Coiled-coil stretches lie at residues 241-328 (ISKE…REEK), 361-430 (LVSE…RLND), 477-498 (KNLE…LEKN), and 540-658 (QQFR…LKKL).

Interacts directly with SSP1. Probable component of a SPB complex composed of ADY3, SSP1, DON1, MPC54, SPO21/MPC70, NUD1 and CNM67. In terms of processing, phosphorylated.

The protein resides in the prospore membrane. The protein localises to the cytoplasm. It localises to the cytoskeleton. Its subcellular location is the microtubule organizing center. It is found in the spindle pole body. Its function is as follows. Involved in the pathway that organizes the prospore membrane (PSM) during sporulation. Mediates the assembly of the DON1 ring structure at the leading edge of PSM during meiosis II. May constitute a physical link between SSP1-containing PSM precursors and the spindle pole body (SPB) and may facilitate the recruitment of other factors that are required to promote spore wall formation. The chain is Accumulates dyads protein 3 (ADY3) from Saccharomyces cerevisiae (strain ATCC 204508 / S288c) (Baker's yeast).